The sequence spans 208 residues: Putative speedy protein E7 (208 aa).

Belongs to the Speedy/Ringo family.

This is Putative speedy protein E7 (SPDYE7P) from Homo sapiens (Human).